Reading from the N-terminus, the 1320-residue chain is Bifunctional protein PutA (1320 aa).

A proline dehydrogenase region spans residues 228–574 (LSRSLNRIIG…SFVNRIADTS (347 aa)). The segment at 653–1119 (QPVAAGEMSP…LANRPESALA (467 aa)) is aldehyde dehydrogenase. Active-site residues include glutamate 883 and cysteine 917.

In the N-terminal section; belongs to the proline dehydrogenase family. The protein in the C-terminal section; belongs to the aldehyde dehydrogenase family. Homodimer. Requires FAD as cofactor.

It carries out the reaction L-proline + a quinone = (S)-1-pyrroline-5-carboxylate + a quinol + H(+). The catalysed reaction is L-glutamate 5-semialdehyde + NAD(+) + H2O = L-glutamate + NADH + 2 H(+). Its pathway is amino-acid degradation; L-proline degradation into L-glutamate; L-glutamate from L-proline: step 1/2. The protein operates within amino-acid degradation; L-proline degradation into L-glutamate; L-glutamate from L-proline: step 2/2. Functionally, oxidizes proline to glutamate for use as a carbon and nitrogen source and also function as a transcriptional repressor of the put operon. The protein is Bifunctional protein PutA (putA) of Escherichia coli (strain K12).